Consider the following 902-residue polypeptide: Nitrate reductase [NADPH] (902 aa).

Cys182 lines the Mo-molybdopterin pocket. The Cytochrome b5 heme-binding domain maps to 537 to 612 (LPLIFADEVA…LKKYCIGRCS (76 aa)). 2 residues coordinate heme: His572 and His595. Positions 637–751 (RTKVPIVLIS…KGPLGHFTYY (115 aa)) constitute an FAD-binding FR-type domain. FAD-binding positions include 689–692 (RAYT), 708–712 (LIKVY), Phe713, 725–727 (LFS), and Thr778. An NADP(+)-binding site is contributed by 872–879 (CMCGPEGM).

Belongs to the nitrate reductase family. In terms of assembly, homodimer. FAD serves as cofactor. Requires heme as cofactor. The cofactor is Mo-molybdopterin.

It catalyses the reaction nitrite + NADP(+) + H2O = nitrate + NADPH + H(+). In terms of biological role, nitrate reductase is a key enzyme involved in the first step of nitrate assimilation in plants, fungi and bacteria. This is Nitrate reductase [NADPH] (NIAA) from Phytophthora infestans (Potato late blight agent).